Here is a 465-residue protein sequence, read N- to C-terminus: uncharacterized protein (465 aa).

Residues 1 to 15 (MEKNYIFENSIYKDE) are compositionally biased toward basic and acidic residues. Disordered regions lie at residues 1–31 (MEKN…NNSS) and 288–320 (QLEK…EQLP).

This is an uncharacterized protein from Dictyostelium discoideum (Social amoeba).